The chain runs to 82 residues: Large ribosomal subunit protein bL31B (82 aa).

This sequence belongs to the bacterial ribosomal protein bL31 family. Type B subfamily. In terms of assembly, part of the 50S ribosomal subunit.

This Amoebophilus asiaticus (strain 5a2) protein is Large ribosomal subunit protein bL31B.